The primary structure comprises 1009 residues: Kinesin-like protein KIN-5C (1009 aa).

The 348-residue stretch at 12–359 folds into the Kinesin motor domain; it reads NVQVLLRCRP…LDYAHRAKNI (348 aa). 98–105 provides a ligand contact to ATP; the sequence is GQTGTGKT. Residues 406–526 adopt a coiled-coil conformation; the sequence is YQEESERKVM…NSSLHQKIGR (121 aa). 2 disordered regions span residues 862–882 and 987–1009; these read SNEQHDAEVDSARTAAEKDVT and YESFATKETKPQQLTRSPLSQVN. Basic and acidic residues-rich tracts occupy residues 863 to 882 and 987 to 996; these read NEQHDAEVDSARTAAEKDVT and YESFATKETK. Positions 997-1009 are enriched in polar residues; the sequence is PQQLTRSPLSQVN.

It belongs to the TRAFAC class myosin-kinesin ATPase superfamily. Kinesin family. KIN-5/BimC subfamily.

Its subcellular location is the cytoplasm. It is found in the cytoskeleton. It localises to the spindle. Responsible for microtubule translocation. May be important for the organization of phragmoplast-specific arrays of microtubules. Plays an essential role in stabilizing the mitotic spindle. Required during mitotic cytokinesis. The polypeptide is Kinesin-like protein KIN-5C (Arabidopsis thaliana (Mouse-ear cress)).